Reading from the N-terminus, the 141-residue chain is MSVERTLSIIKPDAVAKNVIGQIIARFENAGLKVIAARLQQLSRADAERFYAVHKERPFFKDLVDFMVSGPVFVQVLEGEGAIQKNRDLMGATDPKKAAPGTIRADFADSIDANAVHGSDAAETAAVEVAFFFPEINIHSR.

Positions 11, 59, 87, 93, 104, and 114 each coordinate ATP. The active-site Pros-phosphohistidine intermediate is His117.

The protein belongs to the NDK family. As to quaternary structure, homotetramer. Mg(2+) serves as cofactor.

Its subcellular location is the cytoplasm. The enzyme catalyses a 2'-deoxyribonucleoside 5'-diphosphate + ATP = a 2'-deoxyribonucleoside 5'-triphosphate + ADP. It carries out the reaction a ribonucleoside 5'-diphosphate + ATP = a ribonucleoside 5'-triphosphate + ADP. Its function is as follows. Major role in the synthesis of nucleoside triphosphates other than ATP. The ATP gamma phosphate is transferred to the NDP beta phosphate via a ping-pong mechanism, using a phosphorylated active-site intermediate. In Bordetella petrii (strain ATCC BAA-461 / DSM 12804 / CCUG 43448), this protein is Nucleoside diphosphate kinase.